Here is a 233-residue protein sequence, read N- to C-terminus: 2,3,4,5-tetrahydropyridine-2,6-dicarboxylate N-acetyltransferase (233 aa).

This sequence belongs to the transferase hexapeptide repeat family. DapH subfamily.

It catalyses the reaction (S)-2,3,4,5-tetrahydrodipicolinate + acetyl-CoA + H2O = L-2-acetamido-6-oxoheptanedioate + CoA. It functions in the pathway amino-acid biosynthesis; L-lysine biosynthesis via DAP pathway; LL-2,6-diaminopimelate from (S)-tetrahydrodipicolinate (acetylase route): step 1/3. In terms of biological role, catalyzes the transfer of an acetyl group from acetyl-CoA to tetrahydrodipicolinate. The sequence is that of 2,3,4,5-tetrahydropyridine-2,6-dicarboxylate N-acetyltransferase from Leuconostoc mesenteroides subsp. mesenteroides (strain ATCC 8293 / DSM 20343 / BCRC 11652 / CCM 1803 / JCM 6124 / NCDO 523 / NBRC 100496 / NCIMB 8023 / NCTC 12954 / NRRL B-1118 / 37Y).